A 253-amino-acid polypeptide reads, in one-letter code: Pimeloyl-[acyl-carrier protein] methyl ester esterase (253 aa).

Substrate is bound by residues tryptophan 18, 78-79, and 139-143; these read SL and FLALD. Serine 78 acts as the Nucleophile in catalysis. Catalysis depends on residues aspartate 203 and histidine 231. Residue histidine 231 participates in substrate binding.

The protein belongs to the AB hydrolase superfamily. Carboxylesterase BioH family. In terms of assembly, monomer.

Its subcellular location is the cytoplasm. It carries out the reaction 6-carboxyhexanoyl-[ACP] methyl ester + H2O = 6-carboxyhexanoyl-[ACP] + methanol + H(+). Its pathway is cofactor biosynthesis; biotin biosynthesis. Functionally, the physiological role of BioH is to remove the methyl group introduced by BioC when the pimeloyl moiety is complete. It allows to synthesize pimeloyl-ACP via the fatty acid synthetic pathway through the hydrolysis of the ester bonds of pimeloyl-ACP esters. This is Pimeloyl-[acyl-carrier protein] methyl ester esterase from Xanthomonas oryzae pv. oryzae (strain MAFF 311018).